The following is a 239-amino-acid chain: Small ribosomal subunit protein uS3c (239 aa).

The KH type-2 domain maps to 43-139; that stretch reads IKNYIQKNRK…RFNISIEKVK (97 aa). Positions 50 to 74 are disordered; that stretch reads NRKKGSNRKIESDSSSEVITHNRKM.

It belongs to the universal ribosomal protein uS3 family. As to quaternary structure, part of the 30S ribosomal subunit.

It is found in the plastid. Its subcellular location is the chloroplast. The chain is Small ribosomal subunit protein uS3c (rps3) from Hordeum vulgare (Barley).